Reading from the N-terminus, the 185-residue chain is Orotate phosphoribosyltransferase (185 aa).

5-phospho-alpha-D-ribose 1-diphosphate contacts are provided by residues arginine 98, lysine 99, lysine 102, histidine 104, and 128-136 (EDVTTTGGS). Orotate-binding residues include threonine 132 and arginine 160.

The protein belongs to the purine/pyrimidine phosphoribosyltransferase family. PyrE subfamily. In terms of assembly, homodimer. Mg(2+) is required as a cofactor.

The catalysed reaction is orotidine 5'-phosphate + diphosphate = orotate + 5-phospho-alpha-D-ribose 1-diphosphate. It functions in the pathway pyrimidine metabolism; UMP biosynthesis via de novo pathway; UMP from orotate: step 1/2. Catalyzes the transfer of a ribosyl phosphate group from 5-phosphoribose 1-diphosphate to orotate, leading to the formation of orotidine monophosphate (OMP). In Bradyrhizobium sp. (strain BTAi1 / ATCC BAA-1182), this protein is Orotate phosphoribosyltransferase.